The sequence spans 243 residues: MDNLNLNKHTSGQFNAELEYIRTQVMSMGGLVEQQLTDAITAMHNQDADLARRVVEGDAKVNMMEIAIDEACVKIIAKRQPTASDLRLVMAIIKTISELERIGDVADKICRTALEKFSQQHQPLLVSLESLGQHTVQMLHDVLDAFARMDLNEAIRIYREDKKVDQEYEGIVRQLMTYMMEDSRTIPSVLTALFCARSIERIGDRCQNICEFIFYYVKGQDFRHIGGDDLEQLLTDHRRVDEA.

The protein belongs to the PhoU family. Homodimer. Interacts with phosphate regulon transcriptional regulatory protein PhoB and ferric uptake regulation protein Fur.

The protein resides in the cytoplasm. In terms of biological role, part of the phosphate (Pho) regulon, which plays a key role in phosphate homeostasis. Encoded together with proteins of the phosphate-specific transport (Pst) system in the polycistronic pstSCAB-phoU operon. PhoU is essential for the repression of the Pho regulon at high phosphate conditions. In this role, it may bind, possibly as a chaperone, to PhoR, PhoB or a PhoR-PhoB complex to promote dephosphorylation of phospho-PhoB, or inhibit formation of the PhoR-PhoB transitory complex. In Edwardsiella tarda, this protein is Phosphate-specific transport system accessory protein PhoU.